Consider the following 250-residue polypeptide: MSTATATALTPELAAKVERLDALLAQIGERHDKVKFASSLAAEDMLLTHAILSKGVPIGIFSLNTGRLHAETLGMIDRVRERYGYEIEQFHPQQDAVDRYVAEHGLNAFYESVELRKSCCHIRKVEPLNRALADVGAWVTGQRREQSVTRAELHEEEQDEARGIAKYNPLADWTEADVWAYLKAFDVPVNPLHARGYPSIGCEPCTRAIRPGEDSRAGRWWWESRDTKECGLHITTITPIPANAEAGAAH.

Residues Cys119, Cys120, Cys202, and Cys205 each coordinate [4Fe-4S] cluster. Cys230 (nucleophile; cysteine thiosulfonate intermediate) is an active-site residue.

Belongs to the PAPS reductase family. CysH subfamily. [4Fe-4S] cluster is required as a cofactor.

It is found in the cytoplasm. It carries out the reaction [thioredoxin]-disulfide + sulfite + AMP + 2 H(+) = adenosine 5'-phosphosulfate + [thioredoxin]-dithiol. The protein operates within sulfur metabolism; hydrogen sulfide biosynthesis; sulfite from sulfate. Catalyzes the formation of sulfite from adenosine 5'-phosphosulfate (APS) using thioredoxin as an electron donor. In Burkholderia cepacia (Pseudomonas cepacia), this protein is Adenosine 5'-phosphosulfate reductase.